The primary structure comprises 200 residues: GTP-binding protein rho2 (200 aa).

Position 15–22 (15–22) interacts with GTP; that stretch reads GDGACGKT. Positions 37 to 45 match the Effector region motif; sequence YVPTVFENY. GTP is bound by residues 62–66 and 120–123; these read DTAGQ and MKAD. A Cysteine methyl ester modification is found at Cys-197. Cys-197 carries S-geranylgeranyl cysteine lipidation. A propeptide spans 198–200 (removed in mature form); the sequence is IIS.

The protein belongs to the small GTPase superfamily. Rho family. In terms of assembly, interacts with pck2.

The protein localises to the cell membrane. Involved in cell morphogenesis, the maintenance of growth direction, control of polarity and of cell wall integrity. Regulates the synthesis of alpha-D-glucan through activation of pck2. The polypeptide is GTP-binding protein rho2 (rho2) (Schizosaccharomyces pombe (strain 972 / ATCC 24843) (Fission yeast)).